A 338-amino-acid chain; its full sequence is Anthranilate phosphoribosyltransferase (338 aa).

5-phospho-alpha-D-ribose 1-diphosphate is bound by residues Gly-78, 81–82, Thr-86, 88–91, 106–114, and Ser-118; these read GD, NIST, and KHGNRSVSS. Gly-78 contacts anthranilate. Ser-90 lines the Mg(2+) pocket. Asn-109 contributes to the anthranilate binding site. Residue Arg-164 coordinates anthranilate. Positions 223 and 224 each coordinate Mg(2+).

Belongs to the anthranilate phosphoribosyltransferase family. As to quaternary structure, homodimer. It depends on Mg(2+) as a cofactor.

The enzyme catalyses N-(5-phospho-beta-D-ribosyl)anthranilate + diphosphate = 5-phospho-alpha-D-ribose 1-diphosphate + anthranilate. Its pathway is amino-acid biosynthesis; L-tryptophan biosynthesis; L-tryptophan from chorismate: step 2/5. Its function is as follows. Catalyzes the transfer of the phosphoribosyl group of 5-phosphorylribose-1-pyrophosphate (PRPP) to anthranilate to yield N-(5'-phosphoribosyl)-anthranilate (PRA). The chain is Anthranilate phosphoribosyltransferase from Bacillus subtilis (strain 168).